A 66-amino-acid polypeptide reads, in one-letter code: Large ribosomal subunit protein bL35 (66 aa).

Residues 1-44 (MPKLKSHRGAAKRFRKTASGAIKRRGAYRNHILTKKSTKQKRHL) are compositionally biased toward basic residues. The interval 1–48 (MPKLKSHRGAAKRFRKTASGAIKRRGAYRNHILTKKSTKQKRHLRVEA) is disordered.

The protein belongs to the bacterial ribosomal protein bL35 family.

This Legionella pneumophila (strain Corby) protein is Large ribosomal subunit protein bL35.